We begin with the raw amino-acid sequence, 319 residues long: GCN5-related N-acetyltransferase 5, chloroplastic (319 aa).

A chloroplast-targeting transit peptide spans 1–55 (MAALSISLAFSVDSLKPTQSTKFGFSSSSHRYPLLYSCKSHRSNLRFAFPPSSVS). In terms of domain architecture, N-acetyltransferase spans 109-297 (MWVRVMRHEE…KHLMRKKLLP (189 aa)). Acetyl-CoA is bound by residues 218–220 (MTV), 226–231 (RRGIGW), 258–260 (DEA), and Y265. Y265 (proton donor) is an active-site residue.

This sequence belongs to the acetyltransferase family. GNAT subfamily. As to quaternary structure, oligomer. Post-translationally, autoacetylated. In terms of tissue distribution, expressed in green tissues.

It localises to the plastid. The protein resides in the chloroplast. The catalysed reaction is an N-terminal L-alpha-aminoacyl-[protein] + acetyl-CoA = N-terminal N(alpha)-acetyl-L-alpha-aminoacyl-[protein] + CoA + H(+). It catalyses the reaction L-lysyl-[protein] + acetyl-CoA = N(6)-acetyl-L-lysyl-[protein] + CoA + H(+). The enzyme catalyses N-terminal L-alanyl-[protein] + acetyl-CoA = N-terminal N(alpha)-acetyl-L-alanyl-[protein] + CoA + H(+). It carries out the reaction N-terminal L-seryl-[protein] + acetyl-CoA = N-terminal N(alpha)-acetyl-L-seryl-[protein] + CoA + H(+). The catalysed reaction is N-terminal L-methionyl-[protein] + acetyl-CoA = N-terminal N(alpha)-acetyl-L-methionyl-[protein] + CoA + H(+). It catalyses the reaction N-terminal L-valyl-[protein] + acetyl-CoA = N-terminal N(alpha)-acetyl-L-valyl-[protein] + CoA + H(+). The enzyme catalyses N-terminal L-threonyl-[protein] + acetyl-CoA = N-terminal N(alpha)-acetyl-L-threonyl-[protein] + CoA + H(+). Its function is as follows. Protein acetyltransferase with dual specificity triggering both N-alpha-acetylation (NTA), with a large spectrum of modified N-termini, including methionine, alanine, serine and to a lower extent threonine and valine as substrates, and epsilon-lysine acetylation (KA). This chain is GCN5-related N-acetyltransferase 5, chloroplastic, found in Arabidopsis thaliana (Mouse-ear cress).